Reading from the N-terminus, the 318-residue chain is DNA repair nuclease/redox regulator APEX1 (318 aa).

Residues 1–59 (MPKRGKKGAVVEDAEEPKTEPEAKKSKAGAKKNEKEAVGEGAVLYEDPPDQKTSPSGKS) are disordered. Positions 2-33 (PKRGKKGAVVEDAEEPKTEPEAKKSKAGAKKN) are necessary for interaction with YBX1, binding to RNA, association together with NPM1 to rRNA, endoribonuclease activity on abasic RNA and localization in the nucleoli. Lys-6 and Lys-7 each carry N6-acetyllysine; by EP300. The short motif at 8–13 (GAVVED) is the Nuclear localization signal (NLS) element. The segment covering 16 to 38 (EPKTEPEAKKSKAGAKKNEKEAV) has biased composition (basic and acidic residues). Residues 23-33 (AKKSKAGAKKN) are necessary for interaction with NPM1 and for efficient rRNA binding. Lys-27, Lys-31, Lys-32, and Lys-35 each carry N6-acetyllysine. Position 54 is a phosphoserine (Ser-54). Residues 64–80 (ICSWNVDGLRAWIKKKG) carry the Nuclear export signal (NES) motif. Cys-65 bears the S-nitrosocysteine; alternate mark. Cys-65 and Cys-93 are oxidised to a cystine. Mg(2+) is bound at residue Asp-70. Cys-93 is subject to S-nitrosocysteine; alternate. Residue Glu-96 coordinates Mg(2+). Tyr-171 is an active-site residue. Lys-197 carries the post-translational modification N6-acetyllysine. Residues Asp-210 and Asn-212 each contribute to the Mg(2+) site. Asp-210 functions as the Proton donor/acceptor in the catalytic mechanism. Thr-233 carries the phosphothreonine; by CDK5 modification. The tract at residues 289–318 (QSVLPALCDSKIRSKALGSDHCPITLYLAL) is mitochondrial targeting sequence (MTS). Asp-308 is a Mg(2+) binding site. Residue Cys-310 is modified to S-nitrosocysteine.

It belongs to the DNA repair enzymes AP/ExoA family. In terms of assembly, monomer. Homodimer; disulfide-linked. Component of the SET complex, composed of at least APEX1, SET, ANP32A, HMGB2, NME1 and TREX1. Associates with the dimer XRCC5/XRCC6 in a DNA-dependent manner. Interacts with SIRT1; the interaction is increased in the context of genotoxic stress. Interacts with HDAC1, HDAC2 and HDAC3; the interactions are not dependent on the APEX1 acetylation status. Interacts with XRCC1; the interaction is induced by SIRT1 and increased with the APEX1 acetylated form. Interacts with NPM1 (via N-terminal domain); the interaction is RNA-dependent and decreases in hydrogen peroxide-damaged cells. Interacts (via N-terminus) with YBX1 (via C-terminus); the interaction is increased in presence of APEX1 acetylated at Lys-6 and Lys-7. Interacts with HNRNPL; the interaction is DNA-dependent. Interacts (via N-terminus) with KPNA1 and KPNA2. Interacts with TXN; the interaction stimulates the FOS/JUN AP-1 complex DNA-binding activity in a redox-dependent manner. Interacts with GZMA, KRT8, MDM2, POLB, PRDX6, PRPF19, RPLP0, TOMM20 and WDR77. Binds to CDK5. Mg(2+) is required as a cofactor. It depends on Mn(2+) as a cofactor. In terms of processing, phosphorylated. Phosphorylation by kinase PKC or casein kinase CK2 results in enhanced redox activity that stimulates binding of the FOS/JUN AP-1 complex to its cognate binding site. AP-endodeoxyribonuclease activity is not affected by CK2-mediated phosphorylation. Phosphorylation of Thr-233 by CDK5 in response to MPP(+)/MPTP (1-methyl-4-phenylpyridinium) reduces AP-endodeoxyribonuclease activity resulting in accumulation of DNA damage and contributing to neuronal death. Acetylated on Lys-6 and Lys-7. Acetylation is increased by the transcriptional coactivator EP300 acetyltransferase, genotoxic agents like H(2)O(2) and methyl methanesulfonate (MMS). Acetylation increases its binding affinity to the negative calcium response element (nCaRE) DNA promoter. The acetylated form induces a stronger binding of YBX1 to the Y-box sequence in the MDR1 promoter than the unacetylated form. Deacetylated on lysines. Lys-6 and Lys-7 are deacetylated by SIRT1. Post-translationally, cleaved at Lys-31 by granzyme A to create the mitochondrial form; leading in reduction of binding to DNA, AP endodeoxyribonuclease activity, redox activation of transcription factors and to enhanced cell death. Cleaved by granzyme K; leading to intracellular ROS accumulation and enhanced cell death after oxidative stress. In terms of processing, cys-69 and Cys-93 are nitrosylated in response to nitric oxide (NO) and lead to the exposure of the nuclear export signal (NES). Ubiquitinated by MDM2; leading to translocation to the cytoplasm and proteasomal degradation. In terms of tissue distribution, the mitochondrial form is expressed in liver (at protein level). Thymus.

The protein resides in the nucleus. It is found in the nucleolus. Its subcellular location is the nucleus speckle. It localises to the endoplasmic reticulum. The protein localises to the cytoplasm. The protein resides in the mitochondrion. The enzyme catalyses Exonucleolytic cleavage in the 3'- to 5'-direction to yield nucleoside 5'-phosphates.. NPM1 stimulates endodeoxyribonuclease activity on double-stranded DNA with AP sites, but inhibits endoribonuclease activity on single-stranded RNA containing AP sites. Functionally, multifunctional protein that plays a central role in the cellular response to oxidative stress. The two major activities of APEX1 are DNA repair and redox regulation of transcriptional factors. Functions as an apurinic/apyrimidinic (AP) endodeoxyribonuclease in the DNA base excision repair (BER) pathway of DNA lesions induced by oxidative and alkylating agents. Initiates repair of AP sites in DNA by catalyzing hydrolytic incision of the phosphodiester backbone immediately adjacent to the damage, generating a single-strand break with 5'-deoxyribose phosphate and 3'-hydroxyl ends. Also incises at AP sites in the DNA strand of DNA/RNA hybrids, single-stranded DNA regions of R-loop structures, and single-stranded RNA molecules. Has 3'-5' exoribonuclease activity on mismatched deoxyribonucleotides at the 3' termini of nicked or gapped DNA molecules during short-patch BER. Possesses DNA 3' phosphodiesterase activity capable of removing lesions (such as phosphoglycolate) blocking the 3' side of DNA strand breaks. May also play a role in the epigenetic regulation of gene expression by participating in DNA demethylation. Acts as a loading factor for POLB onto non-incised AP sites in DNA and stimulates the 5'-terminal deoxyribose 5'-phosphate (dRp) excision activity of POLB. Plays a role in the protection from granzyme-mediated cellular repair leading to cell death. Also involved in the DNA cleavage step of class switch recombination (CSR). On the other hand, APEX1 also exerts reversible nuclear redox activity to regulate DNA binding affinity and transcriptional activity of transcriptional factors by controlling the redox status of their DNA-binding domain, such as the FOS/JUN AP-1 complex after exposure to IR. Involved in calcium-dependent down-regulation of parathyroid hormone (PTH) expression by binding to negative calcium response elements (nCaREs). Together with HNRNPL or the dimer XRCC5/XRCC6, associates with nCaRE, acting as an activator of transcriptional repression. Stimulates the YBX1-mediated MDR1 promoter activity, when acetylated at Lys-6 and Lys-7, leading to drug resistance. Also acts as an endoribonuclease involved in the control of single-stranded RNA metabolism. Plays a role in regulating MYC mRNA turnover by preferentially cleaving in between UA and CA dinucleotides of the MYC coding region determinant (CRD). In association with NMD1, plays a role in the rRNA quality control process during cell cycle progression. Associates, together with YBX1, on the MDR1 promoter. Together with NPM1, associates with rRNA. Binds DNA and RNA. In Bos taurus (Bovine), this protein is DNA repair nuclease/redox regulator APEX1 (APEX1).